Reading from the N-terminus, the 669-residue chain is DNA mismatch repair protein MutL (669 aa).

The segment covering 356–371 (FEQRQNTENKQEKTFS) has biased composition (basic and acidic residues). A disordered region spans residues 356 to 379 (FEQRQNTENKQEKTFSSEESNSKP).

This sequence belongs to the DNA mismatch repair MutL/HexB family.

Its function is as follows. This protein is involved in the repair of mismatches in DNA. It is required for dam-dependent methyl-directed DNA mismatch repair. May act as a 'molecular matchmaker', a protein that promotes the formation of a stable complex between two or more DNA-binding proteins in an ATP-dependent manner without itself being part of a final effector complex. The protein is DNA mismatch repair protein MutL of Staphylococcus aureus (strain MRSA252).